A 645-amino-acid polypeptide reads, in one-letter code: MQLSWKDIPTVAPANDMLDIVLNRTQRKTPTVIRPGFKITRIRAFYMRKVKFTAEGFEEKFDDILKGFPNINDVHPFHRDLMDTLYEKNHYKISLAAVSRAKTLVEQVSRDYTRLLKFGQSLFQCKQLKRAALGRMATIVKKLKDPLVYLEQVRQHLGRLPSIDPNTRTLLICGYPNVGKSSFLRCITKSDVEVQPYAFTTKSLYVGHFDYKYLRFQAIDTPGILDRPTEEMNNIEMQSIYAIAHLRSCVMYFMDLSEQCGFSVEAQVKLFHSIKPLFANKSVMVVINKTDIIRPEDLDEERAKLLQTVTELPGVEIMSASCQLEDNVMNVRNKACEKLLASRIENKLKSQARITNVLNKIHVAKPQARDDVERTPYIPEEFKKLKKYDPEDPERRLLARDIEAENGGAGVFNINLKDKYILDDDEWKNDIMPEIMDGKNVYDFLDPDIAAKLQALEEEEERLEKEGFYDSDEDESYGGFDQEEIDEIREKADWIRNKQKKMIAEARNKKSLRNKAMMPRSKLVKSFGDMEKHMATLGHDMSSLQDKHRAAAEKSRYVETGADVVFGQNDSMASGSNGGKLRQSDRLLDGVADGSMRSKADRMAKLQRRQRNRDARQGEADRHATASLPKHLFSGKRGIGKSDFR.

The OBG-type G domain occupies 168-340 (RTLLICGYPN…VRNKACEKLL (173 aa)). Residues 174-181 (GYPNVGKS), 220-224 (DTPGI), and 288-291 (NKTD) each bind GTP. Residues 567-645 (GQNDSMASGS…KRGIGKSDFR (79 aa)) form a disordered region. Residues 612 to 624 (NRDARQGEADRHA) show a composition bias toward basic and acidic residues.

Belongs to the TRAFAC class OBG-HflX-like GTPase superfamily. OBG GTPase family. NOG subfamily.

The protein localises to the nucleus. Its subcellular location is the nucleolus. Its function is as follows. Involved in the biogenesis of the 60S ribosomal subunit. The chain is Nucleolar GTP-binding protein 1 (NOG1) from Candida glabrata (strain ATCC 2001 / BCRC 20586 / JCM 3761 / NBRC 0622 / NRRL Y-65 / CBS 138) (Yeast).